Here is a 276-residue protein sequence, read N- to C-terminus: UPF0761 membrane protein APL_1950 (276 aa).

7 helical membrane passes run 33 to 53, 90 to 110, 125 to 145, 147 to 167, 171 to 191, 203 to 223, and 239 to 259; these read TLAIVPLVMVVFSIFTAFPIF, MGIVSTIGLVVVALMLIQSID, IFISFLLYAVILFIAPLLAGG, IAISSYIFSMAIFNENGLLSF, LLQYTPFLLIWLLFTTVYWLV, LGAIVAAIFFTLGKQAFVWYI, and LPIMLLWIHLSWQVVLFGGLI.

The protein belongs to the UPF0761 family.

The protein resides in the cell inner membrane. The polypeptide is UPF0761 membrane protein APL_1950 (Actinobacillus pleuropneumoniae serotype 5b (strain L20)).